We begin with the raw amino-acid sequence, 207 residues long: Ribosome maturation factor RimM (207 aa).

A PRC barrel domain is found at E130–Y207.

Belongs to the RimM family. As to quaternary structure, binds ribosomal protein uS19.

It is found in the cytoplasm. In terms of biological role, an accessory protein needed during the final step in the assembly of 30S ribosomal subunit, possibly for assembly of the head region. Essential for efficient processing of 16S rRNA. May be needed both before and after RbfA during the maturation of 16S rRNA. It has affinity for free ribosomal 30S subunits but not for 70S ribosomes. The polypeptide is Ribosome maturation factor RimM (Cupriavidus taiwanensis (strain DSM 17343 / BCRC 17206 / CCUG 44338 / CIP 107171 / LMG 19424 / R1) (Ralstonia taiwanensis (strain LMG 19424))).